The primary structure comprises 157 residues: Large ribosomal subunit protein uL13m (157 aa).

The transit peptide at methionine 1–leucine 29 directs the protein to the mitochondrion.

This sequence belongs to the universal ribosomal protein uL13 family. In terms of assembly, component of the mitochondrial large ribosomal subunit (mt-LSU). Mature yeast 74S mitochondrial ribosomes consist of a small (37S) and a large (54S) subunit. The 37S small subunit contains a 15S ribosomal RNA (15S mt-rRNA) and at least 32 different proteins. The 54S large subunit contains a 21S rRNA (21S mt-rRNA) and at least 45 different proteins.

The protein localises to the mitochondrion. In terms of biological role, component of the mitochondrial ribosome (mitoribosome), a dedicated translation machinery responsible for the synthesis of mitochondrial genome-encoded proteins, including at least some of the essential transmembrane subunits of the mitochondrial respiratory chain. The mitoribosomes are attached to the mitochondrial inner membrane and translation products are cotranslationally integrated into the membrane. The polypeptide is Large ribosomal subunit protein uL13m (Schizosaccharomyces pombe (strain 972 / ATCC 24843) (Fission yeast)).